We begin with the raw amino-acid sequence, 727 residues long: DNA topoisomerase 3 (727 aa).

Positions 3 to 136 (KTVVLAEKPS…IKRLWISSVT (134 aa)) constitute a Toprim domain. Residues E9 and D105 each contribute to the Mg(2+) site. The Topo IA-type catalytic domain maps to 153–593 (YENLYHSAVA…DMKAYAHQTV (441 aa)). Positions 187-192 (SCGRVQ) are interaction with DNA. Y310 (O-(5'-phospho-DNA)-tyrosine intermediate) is an active-site residue. Over residues 685–699 (KRKNKDKARATKRDV) the composition is skewed to basic and acidic residues. Residues 685 to 714 (KRKNKDKARATKRDVSSYMKKQNKDEPINN) are disordered.

This sequence belongs to the type IA topoisomerase family. Mg(2+) serves as cofactor.

The enzyme catalyses ATP-independent breakage of single-stranded DNA, followed by passage and rejoining.. Releases the supercoiling and torsional tension of DNA, which is introduced during the DNA replication and transcription, by transiently cleaving and rejoining one strand of the DNA duplex. Introduces a single-strand break via transesterification at a target site in duplex DNA. The scissile phosphodiester is attacked by the catalytic tyrosine of the enzyme, resulting in the formation of a DNA-(5'-phosphotyrosyl)-enzyme intermediate and the expulsion of a 3'-OH DNA strand. The free DNA strand then undergoes passage around the unbroken strand, thus removing DNA supercoils. Finally, in the religation step, the DNA 3'-OH attacks the covalent intermediate to expel the active-site tyrosine and restore the DNA phosphodiester backbone. The protein is DNA topoisomerase 3 of Bacillus subtilis (strain 168).